Reading from the N-terminus, the 966-residue chain is C4 phosphoenolpyruvate carboxylase (966 aa).

A Phosphoserine modification is found at Ser11. His172 is a catalytic residue. Trp283, Arg450, and Asp597 together coordinate D-glucose 6-phosphate. The active site involves Lys600. Arg635 contributes to the D-glucose 6-phosphate binding site. The active site involves Arg641. Residue Arg641 participates in L-aspartate binding. Thr665 contributes to the D-glucose 6-phosphate binding site. Residue Gln673 participates in L-aspartate binding. Residues Arg753 and 767–769 (RAI) contribute to the D-glucose 6-phosphate site. 3 residues coordinate L-aspartate: Lys829, Arg888, and Asn964.

The protein belongs to the PEPCase type 1 family. As to quaternary structure, homotetramer. Mg(2+) is required as a cofactor. Expressed in mesophyll cells, but not in bundle-sheath, roots, stems and flowers.

The protein localises to the cytoplasm. It catalyses the reaction oxaloacetate + phosphate = phosphoenolpyruvate + hydrogencarbonate. The protein operates within photosynthesis; C4 acid pathway. 5 fold activation by the allosteric regulator glucose-6-phosphate. Low sensitivity to inhibition by L-malate and L-aspartate. Up-regulated by light-reversible phosphorylation. In terms of biological role, forms oxaloacetate through the carboxylation of phosphoenolpyruvate (PEP). Catalyzes the first step of C4 photosynthesis. The chain is C4 phosphoenolpyruvate carboxylase from Flaveria trinervia (Clustered yellowtops).